Consider the following 694-residue polypeptide: Elongation factor G (694 aa).

Positions 9 to 288 (DAIRNIGIMA…VIVKWLPSPL (280 aa)) constitute a tr-type G domain. GTP-binding positions include 18–25 (AHIDAGKT), 82–86 (DTPGH), and 136–139 (NKMD).

The protein belongs to the TRAFAC class translation factor GTPase superfamily. Classic translation factor GTPase family. EF-G/EF-2 subfamily.

Its subcellular location is the cytoplasm. In terms of biological role, catalyzes the GTP-dependent ribosomal translocation step during translation elongation. During this step, the ribosome changes from the pre-translocational (PRE) to the post-translocational (POST) state as the newly formed A-site-bound peptidyl-tRNA and P-site-bound deacylated tRNA move to the P and E sites, respectively. Catalyzes the coordinated movement of the two tRNA molecules, the mRNA and conformational changes in the ribosome. In Chlamydia trachomatis serovar L2b (strain UCH-1/proctitis), this protein is Elongation factor G.